A 100-amino-acid polypeptide reads, in one-letter code: Urease subunit gamma (100 aa).

This sequence belongs to the urease gamma subunit family. As to quaternary structure, heterotrimer of UreA (gamma), UreB (beta) and UreC (alpha) subunits. Three heterotrimers associate to form the active enzyme.

It is found in the cytoplasm. The enzyme catalyses urea + 2 H2O + H(+) = hydrogencarbonate + 2 NH4(+). The protein operates within nitrogen metabolism; urea degradation; CO(2) and NH(3) from urea (urease route): step 1/1. This is Urease subunit gamma from Alcanivorax borkumensis (strain ATCC 700651 / DSM 11573 / NCIMB 13689 / SK2).